The primary structure comprises 154 residues: Myoglobin (154 aa).

The Globin domain maps to G2–K148. The residue at position 4 (S4) is a Phosphoserine. H65 provides a ligand contact to nitrite. H65 serves as a coordination point for O2. Position 68 is a phosphothreonine (T68). H94 is a binding site for heme b.

Belongs to the globin family. As to quaternary structure, monomeric.

It is found in the cytoplasm. The protein resides in the sarcoplasm. It catalyses the reaction Fe(III)-heme b-[protein] + nitric oxide + H2O = Fe(II)-heme b-[protein] + nitrite + 2 H(+). It carries out the reaction H2O2 + AH2 = A + 2 H2O. Functionally, monomeric heme protein which primary function is to store oxygen and facilitate its diffusion within muscle tissues. Reversibly binds oxygen through a pentacoordinated heme iron and enables its timely and efficient release as needed during periods of heightened demand. Depending on the oxidative conditions of tissues and cells, and in addition to its ability to bind oxygen, it also has a nitrite reductase activity whereby it regulates the production of bioactive nitric oxide. Under stress conditions, like hypoxia and anoxia, it also protects cells against reactive oxygen species thanks to its pseudoperoxidase activity. The protein is Myoglobin (MB) of Lepilemur mustelinus (Weasel sportive lemur).